Consider the following 833-residue polypeptide: Multiphosphoryl transfer protein 2 (833 aa).

Positions 2 to 91 (ALIVEFICEL…QWLRDEFPHC (90 aa)) constitute an HPr domain. The Tele-phosphohistidine intermediate; for HPr activity role is filled by His16. His16 bears the Phosphohistidine; by EI mark. The tract at residues 143–653 (LGNLPAAKGV…AAKARMAQLD (511 aa)) is PTS EI. The active-site Tele-phosphohistidine intermediate; for PTS EI activity is His301. His301 bears the Phosphohistidine; by autocatalysis mark. 2 residues coordinate phosphoenolpyruvate: Arg408 and Arg444. Positions 543 and 567 each coordinate Mg(2+). Phosphoenolpyruvate contacts are provided by residues 566–567 (ND) and Arg577. Cys614 serves as the catalytic Proton donor; for EI activity. In terms of domain architecture, PTS EIIA type-2 spans 688-830 (PLVTAECITL…DAIASLLQHE (143 aa)). The Tele-phosphohistidine intermediate; for PTS EIIA activity role is filled by His750. His750 carries the post-translational modification Phosphohistidine; by HPr.

Belongs to the PEP-utilizing enzyme family. The cofactor is Mg(2+).

The protein resides in the cytoplasm. It catalyses the reaction L-histidyl-[protein] + phosphoenolpyruvate = N(pros)-phospho-L-histidyl-[protein] + pyruvate. It carries out the reaction D-fructose(out) + N(pros)-phospho-L-histidyl-[protein] = D-fructose 1-phosphate(in) + L-histidyl-[protein]. Functionally, multifunctional protein that includes general (non sugar-specific) and sugar-specific components of the phosphoenolpyruvate-dependent sugar phosphotransferase system (sugar PTS). This major carbohydrate active transport system catalyzes the phosphorylation of incoming sugar substrates concomitantly with their translocation across the cell membrane. The enzyme II FrwABC PTS system is involved in fructose transport. The chain is Multiphosphoryl transfer protein 2 from Escherichia coli (strain K12).